Consider the following 201-residue polypeptide: UPF0301 protein Rleg2_0617 (201 aa).

It belongs to the UPF0301 (AlgH) family.

The sequence is that of UPF0301 protein Rleg2_0617 from Rhizobium leguminosarum bv. trifolii (strain WSM2304).